A 510-amino-acid chain; its full sequence is Light-independent protochlorophyllide reductase subunit B (510 aa).

Asp36 provides a ligand contact to [4Fe-4S] cluster. Asp296 serves as the catalytic Proton donor. Substrate is bound at residue Gly431 to Met432.

The protein belongs to the ChlB/BchB/BchZ family. Protochlorophyllide reductase is composed of three subunits; ChlL, ChlN and ChlB. Forms a heterotetramer of two ChlB and two ChlN subunits. The cofactor is [4Fe-4S] cluster.

Its subcellular location is the plastid. It localises to the chloroplast. It catalyses the reaction chlorophyllide a + oxidized 2[4Fe-4S]-[ferredoxin] + 2 ADP + 2 phosphate = protochlorophyllide a + reduced 2[4Fe-4S]-[ferredoxin] + 2 ATP + 2 H2O. It functions in the pathway porphyrin-containing compound metabolism; chlorophyll biosynthesis (light-independent). Its function is as follows. Component of the dark-operative protochlorophyllide reductase (DPOR) that uses Mg-ATP and reduced ferredoxin to reduce ring D of protochlorophyllide (Pchlide) to form chlorophyllide a (Chlide). This reaction is light-independent. The NB-protein (ChlN-ChlB) is the catalytic component of the complex. This Chlorokybus atmophyticus (Soil alga) protein is Light-independent protochlorophyllide reductase subunit B.